Here is a 454-residue protein sequence, read N- to C-terminus: Glutamyl-tRNA reductase (454 aa).

Substrate contacts are provided by residues 50-53, serine 103, 108-110, and glutamine 114; these read TCNR and EDQ. Residue cysteine 51 is the Nucleophile of the active site. 182–187 serves as a coordination point for NADP(+); sequence GAGEMG. The disordered stretch occupies residues 407–454; that stretch reads LFDPNFGGDTPQPDRPDDIPRAAERGDISGDDLPDDVPNHIAEKVSDG. 2 stretches are compositionally biased toward basic and acidic residues: residues 418 to 434 and 443 to 454; these read QPDR…RGDI and VPNHIAEKVSDG.

Belongs to the glutamyl-tRNA reductase family. Homodimer.

It carries out the reaction (S)-4-amino-5-oxopentanoate + tRNA(Glu) + NADP(+) = L-glutamyl-tRNA(Glu) + NADPH + H(+). The protein operates within porphyrin-containing compound metabolism; protoporphyrin-IX biosynthesis; 5-aminolevulinate from L-glutamyl-tRNA(Glu): step 1/2. In terms of biological role, catalyzes the NADPH-dependent reduction of glutamyl-tRNA(Glu) to glutamate 1-semialdehyde (GSA). In Haloquadratum walsbyi (strain DSM 16790 / HBSQ001), this protein is Glutamyl-tRNA reductase.